A 73-amino-acid chain; its full sequence is UPF0352 protein APJL_0577 (73 aa).

It belongs to the UPF0352 family.

The polypeptide is UPF0352 protein APJL_0577 (Actinobacillus pleuropneumoniae serotype 3 (strain JL03)).